A 614-amino-acid polypeptide reads, in one-letter code: MNRFIAFFRSVFLIGLVATAFGALPARAANETAPDYALSMHGDVALPADYTHFPYTNPDAPKKGSLTVGVVGTFDSLNPFVLKSMRTTARGLYNDGEFGNMVYQTLMLRSRDEPFTLYSLLAEKVAIDPERKWVEFTLNPKAKWSDGQPVTVDDVLFTYDILTEKGRPPYNSRMSRVAKIEKTGERSVRFTFNEKSDREFPMLIAGSMPVLPKHAINRDTFGNSTLEPPIGSGPYVVASVQPGQRIVYKRNPDYWGKDLPSQRGFNNFDKISIEYYRNETSLFESFKKGILDIFIEGNPIRWEKLYDFPAVEQGKVIKDTFEKGTPADMLGFVFNTRRPIFADRRVRQALGLLFDFEWANSNLFAGQYRRTQSFWEGSQLSSVGRPADARERELLAPFPGAVREDVMNGTWHPPVTDGSGHDRVPAKKAYDLLSQAGFQFKDGMAIDPTGKPFAFEIMTRSPDEEKIALAYQRNLSRLGIAVEIHTVDDAQYQQRLQTFDYDMILGALASSLSPGNEQWLRWGSASRDVQGSFNFAGVADPAVDAMIEALLAARNRADFVSAVRALDRVLISGDYYVPLYHLPYQWVARWDRIEHPQKTPLSGYQLPAWWHTSQ.

The N-terminal stretch at 1-28 (MNRFIAFFRSVFLIGLVATAFGALPARA) is a signal peptide.

Belongs to the bacterial solute-binding protein 5 family.

Its subcellular location is the periplasm. The chain is Putative binding protein BMEII0691 from Brucella melitensis biotype 1 (strain ATCC 23456 / CCUG 17765 / NCTC 10094 / 16M).